A 443-amino-acid polypeptide reads, in one-letter code: Transcriptional adapter 2-alpha (443 aa).

Phosphoserine is present on Ser6. The ZZ-type zinc-finger motif lies at 12–69; sequence SDKPPCRGCSSYLMEPYIKCAECGPPPFFLCLQCFTRGFEYKKHQSDHTYEIMTSDFP. Positions 17, 20, 31, 34, 42, 45, 55, and 59 each coordinate Zn(2+). The region spanning 70–122 is the SANT domain; it reads VLDPSWTAQEEMALLEAVMDCGFGNWQDVANQMCTKTKEECEKHYMKHFINNP. Glycyl lysine isopeptide (Lys-Gly) (interchain with G-Cter in SUMO2) cross-links involve residues Lys132 and Lys138. Residues 347-359 are compositionally biased toward polar residues; it reads LSPSVPMTSNSGR. The segment at 347–372 is disordered; it reads LSPSVPMTSNSGRRSAPPLNLTGLPG. The SWIRM domain maps to 356-443; sequence NSGRRSAPPL…LIREGYITKA (88 aa). Residues 426–435 mediate DNA binding; it reads KTRKIYDFLI.

As to quaternary structure, interacts with GCN5 and NR3C1. Associated with the P/CAF protein in the PCAF complex. Component of the PCAF complex, at least composed of TADA2L/ADA2, TADA3L/ADA3, TAF5L/PAF65-beta, TAF6L/PAF65-alpha, TAF10/TAFII30, TAF12/TAFII20, TAF9/TAFII31 and TRRAP. Component of the ADA2A-containing complex (ATAC), composed of KAT14, KAT2A, TADA2L, TADA3L, ZZ3, MBIP, WDR5, YEATS2, CCDC101 and DR1. Interacts with CCDC134.

It is found in the nucleus. The protein localises to the chromosome. In terms of biological role, component of the ATAC complex, a complex with histone acetyltransferase activity on histones H3 and H4. Required for the function of some acidic activation domains, which activate transcription from a distant site. Binds double-stranded DNA. Binds dinucleosomes, probably at the linker region between neighboring nucleosomes. Plays a role in chromatin remodeling. May promote TP53/p53 'Lys-321' acetylation, leading to reduced TP53 stability and transcriptional activity. May also promote XRCC6 acetylation thus facilitating cell apoptosis in response to DNA damage. This chain is Transcriptional adapter 2-alpha (TADA2A), found in Bos taurus (Bovine).